Reading from the N-terminus, the 150-residue chain is 3-dehydroquinate dehydratase (150 aa).

Residue Tyr26 is the Proton acceptor of the active site. Residues Asn77, His83, and Asp90 each contribute to the substrate site. The Proton donor role is filled by His103. Substrate contacts are provided by residues 104–105 (LS) and Arg114.

The protein belongs to the type-II 3-dehydroquinase family. In terms of assembly, homododecamer.

It catalyses the reaction 3-dehydroquinate = 3-dehydroshikimate + H2O. It participates in metabolic intermediate biosynthesis; chorismate biosynthesis; chorismate from D-erythrose 4-phosphate and phosphoenolpyruvate: step 3/7. Its function is as follows. Catalyzes a trans-dehydration via an enolate intermediate. The sequence is that of 3-dehydroquinate dehydratase from Yersinia enterocolitica serotype O:8 / biotype 1B (strain NCTC 13174 / 8081).